The primary structure comprises 315 residues: Protein phosphatase PTC7 homolog fig (315 aa).

A PPM-type phosphatase domain is found at 54–309 (KHSIASAKDN…DDITVILATV (256 aa)). Residues aspartate 86, glycine 87, and aspartate 231 each contribute to the Mn(2+) site.

This sequence belongs to the PP2C family. Requires Mg(2+) as cofactor. It depends on Mn(2+) as a cofactor.

It carries out the reaction O-phospho-L-seryl-[protein] + H2O = L-seryl-[protein] + phosphate. The enzyme catalyses O-phospho-L-threonyl-[protein] + H2O = L-threonyl-[protein] + phosphate. The protein is Protein phosphatase PTC7 homolog fig of Drosophila willistoni (Fruit fly).